The following is a 541-amino-acid chain: Tryptophan N-monooxygenase 1 (541 aa).

Residues 21 to 41 (FSTLYLLSTLQAFVAITLVML) traverse the membrane as a helical segment. Cys-477 is a heme binding site.

It belongs to the cytochrome P450 family. The cofactor is heme. Found in all tissues tested. Highest expression in roots, and low expression in stem.

The protein resides in the membrane. The catalysed reaction is L-tryptophan + 2 reduced [NADPH--hemoprotein reductase] + 2 O2 = (E)-(indol-3-yl)acetaldehyde oxime + 2 oxidized [NADPH--hemoprotein reductase] + CO2 + 3 H2O + 2 H(+). In terms of biological role, converts tryptophan to indole-3-acetaldoxime, a precursor for tryptophan-derived glucosinolates and indole-3-acetic acid (IAA). Involved in the biosynthetic pathway to 4-hydroxyindole-3-carbonyl nitrile (4-OH-ICN), a cyanogenic metabolite required for inducible pathogen defense. The polypeptide is Tryptophan N-monooxygenase 1 (CYP79B2) (Arabidopsis thaliana (Mouse-ear cress)).